A 443-amino-acid chain; its full sequence is Multidrug resistance protein MdtA (443 aa).

The signal sequence occupies residues 1–24 (MKAQSKRTSRLLILLGIAVAIIVA). A compositionally biased stretch (polar residues) spans 36–46 (DGSTGAQQHAV). 2 disordered regions span residues 36 to 57 (DGSTGAQQHAVGNNPARAGGRR) and 398 to 443 (TPRS…AEKS). Positions 409-419 (AAEKPATAEKA) are enriched in basic and acidic residues. Residues 427-443 (SATGASAGSTTTAAEKS) are compositionally biased toward low complexity.

Belongs to the membrane fusion protein (MFP) (TC 8.A.1) family. As to quaternary structure, part of a tripartite efflux system composed of MdtA, MdtB and MdtC.

The protein localises to the cell inner membrane. The polypeptide is Multidrug resistance protein MdtA (Yersinia enterocolitica serotype O:8 / biotype 1B (strain NCTC 13174 / 8081)).